Here is a 1026-residue protein sequence, read N- to C-terminus: Phosphoenolpyruvate carboxylase (1026 aa).

Residues His199 and Lys672 contribute to the active site.

This sequence belongs to the PEPCase type 1 family. It depends on Mg(2+) as a cofactor.

The enzyme catalyses oxaloacetate + phosphate = phosphoenolpyruvate + hydrogencarbonate. Functionally, forms oxaloacetate, a four-carbon dicarboxylic acid source for the tricarboxylic acid cycle. This chain is Phosphoenolpyruvate carboxylase (ppc), found in Nostoc sp. (strain PCC 7120 / SAG 25.82 / UTEX 2576).